The sequence spans 347 residues: Tetraacyldisaccharide 4'-kinase (347 aa).

64–71 (YVGGTGKT) contacts ATP.

Belongs to the LpxK family.

The enzyme catalyses a lipid A disaccharide + ATP = a lipid IVA + ADP + H(+). The protein operates within glycolipid biosynthesis; lipid IV(A) biosynthesis; lipid IV(A) from (3R)-3-hydroxytetradecanoyl-[acyl-carrier-protein] and UDP-N-acetyl-alpha-D-glucosamine: step 6/6. In terms of biological role, transfers the gamma-phosphate of ATP to the 4'-position of a tetraacyldisaccharide 1-phosphate intermediate (termed DS-1-P) to form tetraacyldisaccharide 1,4'-bis-phosphate (lipid IVA). The polypeptide is Tetraacyldisaccharide 4'-kinase (Bordetella bronchiseptica (strain ATCC BAA-588 / NCTC 13252 / RB50) (Alcaligenes bronchisepticus)).